We begin with the raw amino-acid sequence, 358 residues long: Holliday junction branch migration complex subunit RuvB (358 aa).

Positions 1–24 are disordered; it reads MSIQTDDFAAPPPKRILSGAPASP. The segment at 5-194 is large ATPase domain (RuvB-L); the sequence is TDDFAAPPPK…FGIVARLEFY (190 aa). Residues leucine 33, arginine 34, glycine 75, lysine 78, threonine 79, threonine 80, 141 to 143, arginine 184, tyrosine 194, and arginine 231 each bind ATP; that span reads EDY. Threonine 79 contacts Mg(2+). The small ATPAse domain (RuvB-S) stretch occupies residues 195-265; it reads SPEELASIVR…IAHRALVMLD (71 aa). Residues 268–358 are head domain (RuvB-H); that stretch reads PQGFDLMDRK…GDMFGAMRPE (91 aa). Positions 304, 323, and 328 each coordinate DNA.

This sequence belongs to the RuvB family. As to quaternary structure, homohexamer. Forms an RuvA(8)-RuvB(12)-Holliday junction (HJ) complex. HJ DNA is sandwiched between 2 RuvA tetramers; dsDNA enters through RuvA and exits via RuvB. An RuvB hexamer assembles on each DNA strand where it exits the tetramer. Each RuvB hexamer is contacted by two RuvA subunits (via domain III) on 2 adjacent RuvB subunits; this complex drives branch migration. In the full resolvosome a probable DNA-RuvA(4)-RuvB(12)-RuvC(2) complex forms which resolves the HJ.

The protein localises to the cytoplasm. The enzyme catalyses ATP + H2O = ADP + phosphate + H(+). Its function is as follows. The RuvA-RuvB-RuvC complex processes Holliday junction (HJ) DNA during genetic recombination and DNA repair, while the RuvA-RuvB complex plays an important role in the rescue of blocked DNA replication forks via replication fork reversal (RFR). RuvA specifically binds to HJ cruciform DNA, conferring on it an open structure. The RuvB hexamer acts as an ATP-dependent pump, pulling dsDNA into and through the RuvAB complex. RuvB forms 2 homohexamers on either side of HJ DNA bound by 1 or 2 RuvA tetramers; 4 subunits per hexamer contact DNA at a time. Coordinated motions by a converter formed by DNA-disengaged RuvB subunits stimulates ATP hydrolysis and nucleotide exchange. Immobilization of the converter enables RuvB to convert the ATP-contained energy into a lever motion, pulling 2 nucleotides of DNA out of the RuvA tetramer per ATP hydrolyzed, thus driving DNA branch migration. The RuvB motors rotate together with the DNA substrate, which together with the progressing nucleotide cycle form the mechanistic basis for DNA recombination by continuous HJ branch migration. Branch migration allows RuvC to scan DNA until it finds its consensus sequence, where it cleaves and resolves cruciform DNA. The protein is Holliday junction branch migration complex subunit RuvB of Albidiferax ferrireducens (strain ATCC BAA-621 / DSM 15236 / T118) (Rhodoferax ferrireducens).